Reading from the N-terminus, the 1379-residue chain is Attractin-like protein 1 (1379 aa).

A disordered region spans residues 1–23 (METGGRARTGTPQPAAPGVWRAR). The first 52 residues, 1 to 52 (METGGRARTGTPQPAAPGVWRARPAGGGGGGASSWLLDGNSWLLCYGFLYLA), serve as a signal peptide directing secretion. In terms of domain architecture, EGF-like 1 spans 53–91 (LYAQVSQSKPCERTGSCFSGRCVNSTCLCDPGWVGDQCQ). Residues 53–1230 (LYAQVSQSKP…FSQHNTIMDL (1178 aa)) lie on the Extracellular side of the membrane. 3 disulfides stabilise this stretch: cysteine 63/cysteine 79, cysteine 81/cysteine 90, and cysteine 93/cysteine 119. Residue asparagine 76 is glycosylated (N-linked (GlcNAc...) asparagine). In terms of domain architecture, CUB spans 93-209 (CQGRFKLTEP…TGFNIFYSIN (117 aa)). Residues asparagine 174 and asparagine 198 are each glycosylated (N-linked (GlcNAc...) asparagine). One can recognise an EGF-like 2 domain in the interval 207 to 245 (SINSCPNNCSGHGKCTTSVSVPSQVYCECDKYWKGEACD). 3 disulfides stabilise this stretch: cysteine 211–cysteine 221, cysteine 215–cysteine 233, and cysteine 235–cysteine 244. Kelch repeat units lie at residues 316–365 (FMWV…LYQE), 367–415 (IFMY…EGHS), 427–475 (VMII…SVYD), 480–531 (SIYV…LING), 533–591 (MLIF…VING), and 592–638 (SMYI…WNKN). N-linked (GlcNAc...) asparagine glycosylation occurs at asparagine 380. 3 consecutive PSI domains span residues 614-657 (NCKA…AKCP), 666-709 (RCYR…TKCH), and 715-760 (ICNK…DACL). Residues 755–873 (IGDACLRVNS…TSMANGLVCE (119 aa)) enclose the C-type lectin domain. 3 N-linked (GlcNAc...) asparagine glycosylation sites follow: asparagine 763, asparagine 778, and asparagine 898. An intrachain disulfide couples cysteine 776 to cysteine 872. 2 PSI domains span residues 889 to 939 (PCSL…ATCS) and 942 to 1012 (NCSG…IQCP). 8 cysteine pairs are disulfide-bonded: cysteine 1014–cysteine 1022, cysteine 1016–cysteine 1028, cysteine 1031–cysteine 1040, cysteine 1043–cysteine 1057, cysteine 1060–cysteine 1069, cysteine 1062–cysteine 1076, cysteine 1078–cysteine 1088, and cysteine 1091–cysteine 1106. 2 consecutive Laminin EGF-like domains span residues 1014 to 1059 (CQCN…QCTA) and 1060 to 1108 (CTCS…TCYY). A glycan (N-linked (GlcNAc...) asparagine) is linked at asparagine 1157. A helical transmembrane segment spans residues 1231–1251 (VQFFVTFFSCFLSLLLVAAVV). Residues 1252 to 1379 (WKIKQTCWAS…HLSTRQGTCV (128 aa)) are Cytoplasmic-facing. The segment at 1354 to 1379 (KASDSKDKTSGVRNRKHLSTRQGTCV) is disordered.

As to quaternary structure, interacts with MC4R.

It is found in the membrane. In terms of biological role, may play a role in melanocortin signaling pathways that regulate energy homeostasis. The protein is Attractin-like protein 1 (ATRNL1) of Homo sapiens (Human).